The sequence spans 138 residues: 18 kDa antigen 2 (138 aa).

One can recognise a sHSP domain in the interval 21 to 131 (GTRRPAVMPM…KPRRIEINHN (111 aa)).

This sequence belongs to the small heat shock protein (HSP20) family.

Functionally, not known. This protein is one of the major immune reactive proteins in mycobacteria. The sequence is that of 18 kDa antigen 2 from Mycobacterium avium.